Reading from the N-terminus, the 1193-residue chain is DNA-directed RNA polymerase subunit beta (1193 aa).

The segment covering 1149–1162 has biased composition (acidic residues); the sequence is EEEIEMRDLEDEED. A disordered region spans residues 1149-1193; sequence EEEIEMRDLEDEEDAKQADGLALSGDEEPEETASADVERDVVTKE. The span at 1184–1193 shows a compositional bias: basic and acidic residues; the sequence is DVERDVVTKE.

Belongs to the RNA polymerase beta chain family. In terms of assembly, RNAP is composed of a core of 2 alpha, a beta and a beta' subunit. The core is associated with a delta subunit, and at least one of epsilon or omega. When a sigma factor is associated with the core the holoenzyme is formed, which can initiate transcription.

The catalysed reaction is RNA(n) + a ribonucleoside 5'-triphosphate = RNA(n+1) + diphosphate. DNA-dependent RNA polymerase catalyzes the transcription of DNA into RNA using the four ribonucleoside triphosphates as substrates. The protein is DNA-directed RNA polymerase subunit beta of Bacillus subtilis (strain 168).